We begin with the raw amino-acid sequence, 910 residues long: Translation factor GUF1 homolog, mitochondrial (910 aa).

Positions 126–188 are disordered; that stretch reads RRGNGLPFER…DGGGAPEHPQ (63 aa). The tr-type G domain maps to 189-366; it reads QNVRNFCILA…RIVSDIPCPA (178 aa). Residues 198 to 205, 259 to 263, and 313 to 316 each bind GTP; these read AHIDSGKS, DTPGH, and NKID. A disordered region spans residues 639–683; sequence GSGDGRADGSADGSADGSADGSGDSSAHGSSDRRGAGCARGSDDI. Over residues 646 to 667 the composition is skewed to low complexity; that stretch reads DGSADGSADGSADGSGDSSAHG.

The protein belongs to the TRAFAC class translation factor GTPase superfamily. Classic translation factor GTPase family. LepA subfamily.

It is found in the mitochondrion inner membrane. It catalyses the reaction GTP + H2O = GDP + phosphate + H(+). Its function is as follows. Promotes mitochondrial protein synthesis. May act as a fidelity factor of the translation reaction, by catalyzing a one-codon backward translocation of tRNAs on improperly translocated ribosomes. Binds to mitochondrial ribosomes in a GTP-dependent manner. In Plasmodium vivax (strain Salvador I), this protein is Translation factor GUF1 homolog, mitochondrial.